Here is a 315-residue protein sequence, read N- to C-terminus: Replication factor C small subunit (315 aa).

43–50 (GSPGVGKT) is a binding site for ATP.

The protein belongs to the activator 1 small subunits family. RfcS subfamily. In terms of assembly, heteromultimer composed of small subunits (RfcS) and large subunits (RfcL).

In terms of biological role, part of the RFC clamp loader complex which loads the PCNA sliding clamp onto DNA. This chain is Replication factor C small subunit, found in Methanococcus maripaludis (strain DSM 14266 / JCM 13030 / NBRC 101832 / S2 / LL).